The following is a 134-amino-acid chain: Translation initiation factor 2 subunit beta (134 aa).

This sequence belongs to the eIF-2-beta/eIF-5 family. Heterotrimer composed of an alpha, a beta and a gamma chain.

Its function is as follows. eIF-2 functions in the early steps of protein synthesis by forming a ternary complex with GTP and initiator tRNA. This Pyrobaculum neutrophilum (strain DSM 2338 / JCM 9278 / NBRC 100436 / V24Sta) (Thermoproteus neutrophilus) protein is Translation initiation factor 2 subunit beta.